The following is a 223-amino-acid chain: Peptidyl-prolyl cis-trans isomerase FKBP16-3, chloroplastic (223 aa).

The transit peptide at 1-36 (MAASSPSLLLPLGSASRNGLTTKNPNSSRYIAARVI) directs the protein to the chloroplast. Residues 37–76 (ASETREQSCKISNLSSRREAMLLVLGVSGGLSMSSLAAYA) constitute a thylakoid transit peptide. The region spanning 124 to 216 (GFQVAANYVA…IFDVSLEFIP (93 aa)) is the PPIase FKBP-type domain.

Belongs to the FKBP-type PPIase family.

It is found in the plastid. Its subcellular location is the chloroplast thylakoid lumen. It catalyses the reaction [protein]-peptidylproline (omega=180) = [protein]-peptidylproline (omega=0). Its function is as follows. PPIases accelerate the folding of proteins. It catalyzes the cis-trans isomerization of proline imidic peptide bonds in oligopeptides. The polypeptide is Peptidyl-prolyl cis-trans isomerase FKBP16-3, chloroplastic (FKBP16-3) (Arabidopsis thaliana (Mouse-ear cress)).